Reading from the N-terminus, the 124-residue chain is Small ribosomal subunit protein bS16 (124 aa).

Positions alanine 80–glutamate 124 are disordered. Residues lysine 99–glutamate 113 show a composition bias toward basic and acidic residues. A compositionally biased stretch (low complexity) spans alanine 114–glutamate 124.

The protein belongs to the bacterial ribosomal protein bS16 family.

This is Small ribosomal subunit protein bS16 from Rhizobium meliloti (strain 1021) (Ensifer meliloti).